Consider the following 302-residue polypeptide: Cyclin-dependent kinase 1-B (302 aa).

Residues 4 to 287 (YTKIEKIGEG…ARKAMLHPYF (284 aa)) form the Protein kinase domain. ATP is bound by residues 10–18 (IGEGTYGVV) and Lys-33. Phosphothreonine is present on Thr-14. Residue Tyr-15 is modified to Phosphotyrosine; by wee1 and wee2. The active-site Proton acceptor is Asp-128. Thr-161 is modified (phosphothreonine; by cak). Residue Ser-277 is modified to Phosphoserine.

This sequence belongs to the protein kinase superfamily. CMGC Ser/Thr protein kinase family. CDC2/CDKX subfamily. As to quaternary structure, forms a stable but non-covalent complex with a regulatory subunit and with a cyclin. Interacts with spdya. Post-translationally, phosphorylation at Tyr-15 by wee1 and wee2 inhibits the protein kinase activity and acts negative regulator of entry into mitosis (G2 to M transition).

Its subcellular location is the nucleus. It carries out the reaction L-seryl-[protein] + ATP = O-phospho-L-seryl-[protein] + ADP + H(+). The catalysed reaction is L-threonyl-[protein] + ATP = O-phospho-L-threonyl-[protein] + ADP + H(+). The enzyme catalyses [DNA-directed RNA polymerase] + ATP = phospho-[DNA-directed RNA polymerase] + ADP + H(+). Phosphorylation at Thr-14 or Tyr-15 inactivates the enzyme, while phosphorylation at Thr-161 activates it. Its function is as follows. Plays a key role in the control of the eukaryotic cell cycle by modulating the centrosome cycle as well as mitotic onset; promotes G2-M transition via association with multiple interphase cyclins. During G2 and early mitosis, CDC25A/B/C-mediated dephosphorylation activates CDK1/cyclin complexes which phosphorylate several substrates that trigger at least centrosome separation, Golgi dynamics, nuclear envelope breakdown and chromosome condensation. Once chromosomes are condensed and aligned at the metaphase plate, CDK1 activity is switched off by WEE1- and PKMYT1-mediated phosphorylation to allow sister chromatid separation, chromosome decondensation, reformation of the nuclear envelope and cytokinesis. Catalyzes lamin (LMNA, LMNB1 and LMNB2) phosphorylation at the onset of mitosis, promoting nuclear envelope breakdown. The protein is Cyclin-dependent kinase 1-B (cdk1-b) of Xenopus laevis (African clawed frog).